A 154-amino-acid chain; its full sequence is NADPH-dependent 7-cyano-7-deazaguanine reductase (154 aa).

The span at 1-23 (MPNTDVSSLSMLGQQTETAQSPE) shows a compositional bias: polar residues. Positions 1–26 (MPNTDVSSLSMLGQQTETAQSPEQAV) are disordered. Catalysis depends on cysteine 52, which acts as the Thioimide intermediate. Aspartate 59 (proton donor) is an active-site residue. Substrate-binding positions include 74 to 76 (VES) and 93 to 94 (HE).

This sequence belongs to the GTP cyclohydrolase I family. QueF type 1 subfamily.

It is found in the cytoplasm. The catalysed reaction is 7-aminomethyl-7-carbaguanine + 2 NADP(+) = 7-cyano-7-deazaguanine + 2 NADPH + 3 H(+). The protein operates within tRNA modification; tRNA-queuosine biosynthesis. Catalyzes the NADPH-dependent reduction of 7-cyano-7-deazaguanine (preQ0) to 7-aminomethyl-7-deazaguanine (preQ1). This chain is NADPH-dependent 7-cyano-7-deazaguanine reductase, found in Rhizobium leguminosarum bv. trifolii (strain WSM2304).